We begin with the raw amino-acid sequence, 241 residues long: MGQKVNPIGLRLGINRTWDSRWFANKGEYSKLLHEDMRIREVLMKNLKQAAVSKIIIERPHKKCRVTIHSARPGVVIGKKGADIDKIRKLVSKLTDSEVVINIVEVRKPEIDATLVADSIAQQLERRVAFRRAMKRAVQSAIRLGAEGIRINCSGRLGGAEIARLEWYREGRVPLHTLRADVDYGVATAHTAYGTCGIKVWIFKGEILEHDPMAQDRKMAELDHAGGGGGGERRRRERDAA.

Positions isoleucine 39–arginine 107 constitute a KH type-2 domain. The interval methionine 219–alanine 241 is disordered. Residues glycine 231–alanine 241 are compositionally biased toward basic and acidic residues.

This sequence belongs to the universal ribosomal protein uS3 family. In terms of assembly, part of the 30S ribosomal subunit. Forms a tight complex with proteins S10 and S14.

In terms of biological role, binds the lower part of the 30S subunit head. Binds mRNA in the 70S ribosome, positioning it for translation. The polypeptide is Small ribosomal subunit protein uS3 (Beijerinckia indica subsp. indica (strain ATCC 9039 / DSM 1715 / NCIMB 8712)).